Consider the following 328-residue polypeptide: GTP 3',8-cyclase (328 aa).

The Radical SAM core domain occupies 1 to 229 (MNQVDYLRIS…DAQVRGAGPA (229 aa)). Residue Arg8 coordinates GTP. Cys15 and Cys19 together coordinate [4Fe-4S] cluster. S-adenosyl-L-methionine is bound at residue Tyr21. Cys22 lines the [4Fe-4S] cluster pocket. Residue Arg60 coordinates GTP. Gly64 contributes to the S-adenosyl-L-methionine binding site. Thr91 is a GTP binding site. Ser115 is a binding site for S-adenosyl-L-methionine. A GTP-binding site is contributed by Lys155. S-adenosyl-L-methionine is bound at residue Met189. Positions 252 and 255 each coordinate [4Fe-4S] cluster. 257–259 (RMR) lines the GTP pocket. Cys269 is a binding site for [4Fe-4S] cluster.

The protein belongs to the radical SAM superfamily. MoaA family. As to quaternary structure, monomer and homodimer. The cofactor is [4Fe-4S] cluster.

The enzyme catalyses GTP + AH2 + S-adenosyl-L-methionine = (8S)-3',8-cyclo-7,8-dihydroguanosine 5'-triphosphate + 5'-deoxyadenosine + L-methionine + A + H(+). It participates in cofactor biosynthesis; molybdopterin biosynthesis. Its function is as follows. Catalyzes the cyclization of GTP to (8S)-3',8-cyclo-7,8-dihydroguanosine 5'-triphosphate. The protein is GTP 3',8-cyclase of Nostoc sp. (strain PCC 7120 / SAG 25.82 / UTEX 2576).